Reading from the N-terminus, the 288-residue chain is Protease HtpX homolog (288 aa).

The next 2 helical transmembrane spans lie at 7–27 (TAVL…MLGG) and 29–49 (QGML…YWFS). Residue His131 participates in Zn(2+) binding. Glu132 is a catalytic residue. His135 is a Zn(2+) binding site. Transmembrane regions (helical) follow at residues 141–161 (ILIS…ANFA) and 177–197 (IASL…QMSI). Glu202 contributes to the Zn(2+) binding site.

It belongs to the peptidase M48B family. Zn(2+) serves as cofactor.

Its subcellular location is the cell inner membrane. The protein is Protease HtpX homolog of Polynucleobacter necessarius subsp. necessarius (strain STIR1).